We begin with the raw amino-acid sequence, 825 residues long: Trimethylamine-N-oxide reductase (825 aa).

A signal peptide (tat-type signal) is located at residues 1–40; the sequence is MKKNNVNEQRRDFLKKTSLGVAGSALSGGMVGVVSKSAVA. Position 187 (Ser187) interacts with Mo-bis(molybdopterin guanine dinucleotide).

The protein belongs to the prokaryotic molybdopterin-containing oxidoreductase family. The cofactor is Mo-bis(molybdopterin guanine dinucleotide). Predicted to be exported by the Tat system. The position of the signal peptide cleavage has not been experimentally proven.

The protein resides in the periplasm. It carries out the reaction trimethylamine + 2 Fe(III)-[cytochrome c] + H2O = trimethylamine N-oxide + 2 Fe(II)-[cytochrome c] + 3 H(+). Reduces trimethylamine-N-oxide (TMAO) into trimethylamine; an anaerobic reaction coupled to energy-yielding reactions. This Haemophilus influenzae (strain ATCC 51907 / DSM 11121 / KW20 / Rd) protein is Trimethylamine-N-oxide reductase (torZ).